Reading from the N-terminus, the 407-residue chain is Arrestin red cell isoform 1 (407 aa).

It belongs to the arrestin family.

It localises to the cytoplasm. The sequence is that of Arrestin red cell isoform 1 from Oncorhynchus mykiss (Rainbow trout).